The sequence spans 808 residues: Ribosome biogenesis protein BOP1 homolog (808 aa).

The disordered stretch occupies residues 1–56 (MTSPKGKPSPKRSAPAPTTAALTPRTEERTEGATSSASASASSHISSSFDSPRDDT). Composition is skewed to low complexity over residues 12-24 (RSAP…ALTP) and 33-50 (ATSS…SSFD). 5 WD repeats span residues 430 to 469 (GHTA…LMKR), 640 to 680 (KFSE…RRFK), 682 to 720 (SGGV…KPYK), 724 to 766 (SHRG…DYNK), and 777 to 808 (KHQR…AWTE).

Belongs to the WD repeat BOP1/ERB1 family.

The protein resides in the nucleus. The protein localises to the nucleolus. It is found in the nucleoplasm. Required for maturation of ribosomal RNAs and formation of the large ribosomal subunit. The polypeptide is Ribosome biogenesis protein BOP1 homolog (Leishmania infantum).